The primary structure comprises 406 residues: Protein IWS1 homolog 2 (406 aa).

2 disordered regions span residues 1 to 28 (MQEL…TGRR) and 41 to 89 (DEVE…SEEV). Residues 10–24 (EWVKELEGENEESKF) are compositionally biased toward basic and acidic residues. Residues 41 to 56 (DEVEEDLDDFTEPADD) show a composition bias toward acidic residues. Positions 69–78 (KKDESGLEKT) are enriched in basic and acidic residues. Residues 201–284 (NLLKNWLEPL…NKWGRIIYNK (84 aa)) form the TFIIS N-terminal domain.

Belongs to the IWS1 family.

It is found in the nucleus. Functionally, transcription factor involved in RNA polymerase II (RNAPII) transcription regulation. Involved in transcription elongation. May function at post-recruitment and elongation steps of transcription. This chain is Protein IWS1 homolog 2, found in Arabidopsis thaliana (Mouse-ear cress).